The following is a 234-amino-acid chain: Phosphoribosylaminoimidazole-succinocarboxamide synthase (234 aa).

This sequence belongs to the SAICAR synthetase family.

It catalyses the reaction 5-amino-1-(5-phospho-D-ribosyl)imidazole-4-carboxylate + L-aspartate + ATP = (2S)-2-[5-amino-1-(5-phospho-beta-D-ribosyl)imidazole-4-carboxamido]succinate + ADP + phosphate + 2 H(+). The protein operates within purine metabolism; IMP biosynthesis via de novo pathway; 5-amino-1-(5-phospho-D-ribosyl)imidazole-4-carboxamide from 5-amino-1-(5-phospho-D-ribosyl)imidazole-4-carboxylate: step 1/2. The polypeptide is Phosphoribosylaminoimidazole-succinocarboxamide synthase (Streptococcus uberis (strain ATCC BAA-854 / 0140J)).